Here is a 206-residue protein sequence, read N- to C-terminus: Crossover junction endodeoxyribonuclease RuvC (206 aa).

Residues aspartate 7, glutamate 67, and aspartate 138 contribute to the active site. 3 residues coordinate Mg(2+): aspartate 7, glutamate 67, and aspartate 138.

It belongs to the RuvC family. Homodimer which binds Holliday junction (HJ) DNA. The HJ becomes 2-fold symmetrical on binding to RuvC with unstacked arms; it has a different conformation from HJ DNA in complex with RuvA. In the full resolvosome a probable DNA-RuvA(4)-RuvB(12)-RuvC(2) complex forms which resolves the HJ. The cofactor is Mg(2+).

Its subcellular location is the cytoplasm. The enzyme catalyses Endonucleolytic cleavage at a junction such as a reciprocal single-stranded crossover between two homologous DNA duplexes (Holliday junction).. In terms of biological role, the RuvA-RuvB-RuvC complex processes Holliday junction (HJ) DNA during genetic recombination and DNA repair. Endonuclease that resolves HJ intermediates. Cleaves cruciform DNA by making single-stranded nicks across the HJ at symmetrical positions within the homologous arms, yielding a 5'-phosphate and a 3'-hydroxyl group; requires a central core of homology in the junction. The consensus cleavage sequence is 5'-(A/T)TT(C/G)-3'. Cleavage occurs on the 3'-side of the TT dinucleotide at the point of strand exchange. HJ branch migration catalyzed by RuvA-RuvB allows RuvC to scan DNA until it finds its consensus sequence, where it cleaves and resolves the cruciform DNA. In Anaeromyxobacter sp. (strain Fw109-5), this protein is Crossover junction endodeoxyribonuclease RuvC.